A 166-amino-acid polypeptide reads, in one-letter code: uncharacterized protein (166 aa).

One can recognise an HTH asnC-type domain in the interval 3-65; the sequence is LTEKETEILE…IDWRKVDGHE (63 aa). The H-T-H motif DNA-binding region spans 22 to 41; the sequence is LETIAKMAGIPVNEVKTIID.

This is an uncharacterized protein from Bacillus subtilis (strain 168).